The following is a 104-amino-acid chain: Phosphoribosyl-ATP pyrophosphatase (104 aa).

This sequence belongs to the PRA-PH family.

It localises to the cytoplasm. It catalyses the reaction 1-(5-phospho-beta-D-ribosyl)-ATP + H2O = 1-(5-phospho-beta-D-ribosyl)-5'-AMP + diphosphate + H(+). The protein operates within amino-acid biosynthesis; L-histidine biosynthesis; L-histidine from 5-phospho-alpha-D-ribose 1-diphosphate: step 2/9. This is Phosphoribosyl-ATP pyrophosphatase from Methanocorpusculum labreanum (strain ATCC 43576 / DSM 4855 / Z).